A 347-amino-acid polypeptide reads, in one-letter code: Quinolinate synthase (347 aa).

Residues His-47 and Ser-68 each coordinate iminosuccinate. Residue Cys-113 participates in [4Fe-4S] cluster binding. Iminosuccinate is bound by residues 139 to 141 (YAN) and Ser-156. Cys-200 contributes to the [4Fe-4S] cluster binding site. Iminosuccinate is bound by residues 226 to 228 (HPE) and Thr-243. Position 297 (Cys-297) interacts with [4Fe-4S] cluster.

It belongs to the quinolinate synthase family. Type 1 subfamily. The cofactor is [4Fe-4S] cluster.

The protein localises to the cytoplasm. The enzyme catalyses iminosuccinate + dihydroxyacetone phosphate = quinolinate + phosphate + 2 H2O + H(+). It participates in cofactor biosynthesis; NAD(+) biosynthesis; quinolinate from iminoaspartate: step 1/1. Its function is as follows. Catalyzes the condensation of iminoaspartate with dihydroxyacetone phosphate to form quinolinate. The sequence is that of Quinolinate synthase from Escherichia fergusonii (strain ATCC 35469 / DSM 13698 / CCUG 18766 / IAM 14443 / JCM 21226 / LMG 7866 / NBRC 102419 / NCTC 12128 / CDC 0568-73).